Consider the following 894-residue polypeptide: Myb-like protein K (894 aa).

Residues 93-139 (LQQQQQSPVTNVATNTPPTLQHSISSPSPNNFNNNNNANNQFLSPNS) are compositionally biased toward low complexity. Disordered stretches follow at residues 93–221 (LQQQ…SASS), 299–353 (QVGN…QPIT), 492–539 (QQQQ…LEMI), and 601–659 (AATT…HWTS). Over residues 140–149 (PQVAKSSPSQ) the composition is skewed to polar residues. Positions 150-221 (NNPSTPIANT…SQSLNSSASS (72 aa)) are enriched in low complexity. The segment covering 300-309 (VGNPMQQSND) has biased composition (polar residues). Low complexity-rich tracts occupy residues 310–353 (MQPQ…QPIT) and 492–527 (QQQQ…PQQM). 2 stretches are compositionally biased toward basic and acidic residues: residues 611 to 640 (GKEE…SKKD) and 649 to 659 (ASKEKTSHWTS). An HTH myb-type domain is found at 649–704 (ASKEKTSHWTSEEHNKFLEAVQQFGIKDYHAIAKFVQTRNHHQVRTHVNTYLKNQK). The segment at residues 677–700 (YHAIAKFVQTRNHHQVRTHVNTYL) is a DNA-binding region (H-T-H motif). The disordered stretch occupies residues 703 to 852 (QKKAEAATSS…EYNSGFDSNS (150 aa)). Low complexity-rich tracts occupy residues 710 to 742 (TSST…QPPI), 751 to 805 (QQQQ…QQPQ), and 815 to 845 (PPNN…NEYN).

The protein localises to the nucleus. The sequence is that of Myb-like protein K (mybK) from Dictyostelium discoideum (Social amoeba).